Here is a 544-residue protein sequence, read N- to C-terminus: Probable acyl-activating enzyme 8 (544 aa).

Belongs to the ATP-dependent AMP-binding enzyme family. As to expression, expressed at low levels in roots, leaves, stems, flowers and developing seeds.

May act as an acid--thiol ligase that activates carboxylic acids by forming acyl-CoAs. In Arabidopsis thaliana (Mouse-ear cress), this protein is Probable acyl-activating enzyme 8 (AAE8).